The primary structure comprises 471 residues: ATP synthase subunit beta (471 aa).

153-160 (GGAGVGKT) lines the ATP pocket.

Belongs to the ATPase alpha/beta chains family. In terms of assembly, F-type ATPases have 2 components, CF(1) - the catalytic core - and CF(0) - the membrane proton channel. CF(1) has five subunits: alpha(3), beta(3), gamma(1), delta(1), epsilon(1). CF(0) has four main subunits: a(1), b(1), b'(1) and c(9-12).

It is found in the cell inner membrane. The enzyme catalyses ATP + H2O + 4 H(+)(in) = ADP + phosphate + 5 H(+)(out). Produces ATP from ADP in the presence of a proton gradient across the membrane. The catalytic sites are hosted primarily by the beta subunits. The chain is ATP synthase subunit beta from Methylibium petroleiphilum (strain ATCC BAA-1232 / LMG 22953 / PM1).